The primary structure comprises 72 residues: Large ribosomal subunit protein bL31 (72 aa).

It belongs to the bacterial ribosomal protein bL31 family. Type A subfamily. As to quaternary structure, part of the 50S ribosomal subunit.

Functionally, binds the 23S rRNA. This is Large ribosomal subunit protein bL31 from Deinococcus deserti (strain DSM 17065 / CIP 109153 / LMG 22923 / VCD115).